A 354-amino-acid chain; its full sequence is Myosin-binding protein H-like (354 aa).

Residues 1–47 (MEAATAPEVAAGSKLKVKEASPADAEPPQASPGQGAGSPTPQLLPPI) are disordered. Residue serine 38 is modified to Phosphoserine. Positions 45–139 (PPIEEHPKIW…GGLEATATID (95 aa)) constitute an Ig-like C2-type 1 domain. Positions 148–238 (PPQSIKLVDV…ETAPITTDLA (91 aa)) constitute a Fibronectin type-III domain. The 85-residue stretch at 261–345 (PKFTQPLADC…VNPLGEASVD (85 aa)) folds into the Ig-like C2-type 2 domain. Cysteines 282 and 333 form a disulfide. Arginine 321 carries the omega-N-methylarginine modification.

It belongs to the immunoglobulin superfamily. MyBP family. Expressed in heart, with higher expression in the atria. In terms of tissue distribution, expressed in left atrium and ventricle, arteria mammaria interna and skeletal muscle. As to expression, expressed specifically en the left atrium.

It is found in the cytoplasm. It localises to the myofibril. The protein localises to the sarcomere. Myosin-binding protein which plays a role in cardiac function. Seems to regulate conduction in the atria and ventricular conduction systems. This chain is Myosin-binding protein H-like, found in Homo sapiens (Human).